The following is a 343-amino-acid chain: D-beta-hydroxybutyrate dehydrogenase, mitochondrial (343 aa).

The transit peptide at 1–46 directs the protein to the mitochondrion; the sequence is MLAARLSRPLSQLPGKALSVRDRENGTRHTLLFYPASFSPDTRRTY. 60 to 84 contributes to the NAD(+) binding site; it reads ITGCDSGFGFSLAKHLHSKGFLVFA. An N6-acetyllysine mark is found at lysine 73 and lysine 97. N6-acetyllysine; alternate is present on lysine 103. Lysine 103 carries the post-translational modification N6-succinyllysine; alternate. Residues lysine 132 and lysine 177 each carry the N6-acetyllysine modification. Methionine 196 contributes to the substrate binding site. Cysteine 209 (proton acceptor) is an active-site residue. An N6-acetyllysine modification is found at lysine 212. Serine 219 is a glycosylation site (O-linked (GlcNAc) serine). Serine 246 carries the phosphoserine modification. An N6-acetyllysine modification is found at lysine 258. N6-acetyllysine; alternate is present on lysine 259. The residue at position 259 (lysine 259) is an N6-succinyllysine; alternate. Lysine 280 is modified (N6-acetyllysine).

This sequence belongs to the short-chain dehydrogenases/reductases (SDR) family. As to quaternary structure, homotetramer. Post-translationally, acetylation of Lys-132 is observed in liver mitochondria from fasted mice but not from fed mice.

The protein resides in the mitochondrion inner membrane. It is found in the mitochondrion matrix. It carries out the reaction (R)-3-hydroxybutanoate + NAD(+) = acetoacetate + NADH + H(+). Requires phosphatidylcholine as an allosteric activator for enzymatic activity. This chain is D-beta-hydroxybutyrate dehydrogenase, mitochondrial, found in Mus musculus (Mouse).